A 345-amino-acid polypeptide reads, in one-letter code: Adenine deaminase (345 aa).

H20, H22, and H204 together coordinate Zn(2+). E207 (proton donor) is an active-site residue. D285 contacts Zn(2+). D286 lines the substrate pocket.

It belongs to the metallo-dependent hydrolases superfamily. Adenosine and AMP deaminases family. Adenine deaminase type 2 subfamily. The cofactor is Zn(2+).

It carries out the reaction adenine + H2O + H(+) = hypoxanthine + NH4(+). Its function is as follows. Catalyzes the hydrolytic deamination of adenine to hypoxanthine. Plays an important role in the purine salvage pathway and in nitrogen catabolism. The polypeptide is Adenine deaminase (Ralstonia pickettii (strain 12J)).